The sequence spans 705 residues: MKYNKLSVAVAAFAFAAVSAQNSNVLKYPETKKVSHTDTYFGTQVSDPYRWLEDDRAEDTKAWVQQEVKFTQDYLAQIPFRDQLKKQLMDIWNYEKISAPFKKGKYTYFSKNDGLQAQSVLYRKDAAGKTEVFLDPNKFSEKGTTSLASVSFNKKGTLVAYSISEGGSDWNKIIILDAETKKQLDETLLDVKFSGISWLGDEGFFYSSYDKPKEGSVLSGMTDKHKVYFHKLGTKQSQDELIIGGDKFPRRYIGAYVTDDQRYLVVSAANATNGNELYIKDLKNKTDFIPIITGFDSNVNVADTDGDTLYLFTDKDAPNKRLVKTTIQNPKAETWKDVIAETSEPLEINTGGGYFFATYMKDAIDQVKQYDKNGKLVRAIKLPGSGNASGFGGEKTEKDLYYSFTNYITPPTIFKYNVTTGNSEVYQKPKVKFNPENYVSEQVFYTSSDGTKIPMMISYKKGLKKDGKNPTILYSYGGFNISLQPAFSVVNAIWMENGGIYAVPNIRGGGEYGKKWHDAGTKMQKKNVFNDFIAAGEYLQKNGYTSKEYMALSGRSNGGLLVGATMTMRPDLAKVAFPGVGVLDMLRYNKFTAGAGWAYDYGTAEDSKEMFEYLKSYSPVHNVKAGTCYPSTMVITSDHDDRVVPAHSFKFGSELQAKQSCKNPILIRIETNAGHGAGRSTEQVVAENADLLSFALYEMGIKSLK.

The first 20 residues, methionine 1–alanine 20, serve as a signal peptide directing secretion. Residues serine 556 and histidine 675 each act as charge relay system in the active site.

This sequence belongs to the peptidase S9A family. As to quaternary structure, monomer.

Its subcellular location is the periplasm. It carries out the reaction Hydrolysis of Pro-|-Xaa &gt;&gt; Ala-|-Xaa in oligopeptides.. Cleaves peptide bonds on the C-terminal side of prolyl residues within peptides that are up to approximately 30 amino acids long. Has an absolute requirement for an X-Pro bond in the trans configuration immediately preceding the Pro-Y scissible bond. This is Prolyl endopeptidase (f1pep1) from Elizabethkingia meningoseptica (Chryseobacterium meningosepticum).